The following is a 579-amino-acid chain: Nuclear hormone receptor family member nhr-71 (579 aa).

Positions 8–83 (SQECMVCSAP…AGMKIGAVQP (76 aa)) form a DNA-binding region, nuclear receptor. 2 consecutive NR C4-type zinc fingers follow at residues 11–31 (CMVC…CRSC) and 47–71 (CKHT…FTKC). 2 disordered regions span residues 82-124 (QPRR…SDGP) and 168-189 (EPIP…PNDD). Composition is skewed to polar residues over residues 106–124 (SMNN…SDGP) and 171–186 (PSTS…QSSP). The NR LBD domain occupies 189 to 452 (DEQQEFNHLV…KFWYETLCYA (264 aa)).

Belongs to the nuclear hormone receptor family.

The protein resides in the nucleus. Orphan nuclear receptor. The polypeptide is Nuclear hormone receptor family member nhr-71 (nhr-71) (Caenorhabditis elegans).